Reading from the N-terminus, the 600-residue chain is 1-deoxy-D-xylulose-5-phosphate synthase (600 aa).

Thiamine diphosphate contacts are provided by residues His63 and 104 to 106 (GHS). Asp135 is a Mg(2+) binding site. Residues 136-137 (GA), Asn164, Tyr271, and Glu352 contribute to the thiamine diphosphate site. Asn164 contacts Mg(2+).

Belongs to the transketolase family. DXPS subfamily. As to quaternary structure, homodimer. Mg(2+) serves as cofactor. It depends on thiamine diphosphate as a cofactor.

It carries out the reaction D-glyceraldehyde 3-phosphate + pyruvate + H(+) = 1-deoxy-D-xylulose 5-phosphate + CO2. Its pathway is metabolic intermediate biosynthesis; 1-deoxy-D-xylulose 5-phosphate biosynthesis; 1-deoxy-D-xylulose 5-phosphate from D-glyceraldehyde 3-phosphate and pyruvate: step 1/1. Catalyzes the acyloin condensation reaction between C atoms 2 and 3 of pyruvate and glyceraldehyde 3-phosphate to yield 1-deoxy-D-xylulose-5-phosphate (DXP). In Campylobacter fetus subsp. fetus (strain 82-40), this protein is 1-deoxy-D-xylulose-5-phosphate synthase.